The sequence spans 387 residues: Cysteine desulfurase IscS (387 aa).

Pyridoxal 5'-phosphate-binding positions include 73-74 (AT), N155, Q183, and 203-205 (SAH). K206 bears the N6-(pyridoxal phosphate)lysine mark. Residue T241 coordinates pyridoxal 5'-phosphate. C328 acts as the Cysteine persulfide intermediate in catalysis. C328 lines the [2Fe-2S] cluster pocket.

This sequence belongs to the class-V pyridoxal-phosphate-dependent aminotransferase family. NifS/IscS subfamily. As to quaternary structure, homodimer. Forms a heterotetramer with IscU, interacts with other sulfur acceptors. Requires pyridoxal 5'-phosphate as cofactor.

It localises to the cytoplasm. It catalyses the reaction (sulfur carrier)-H + L-cysteine = (sulfur carrier)-SH + L-alanine. It participates in cofactor biosynthesis; iron-sulfur cluster biosynthesis. In terms of biological role, master enzyme that delivers sulfur to a number of partners involved in Fe-S cluster assembly, tRNA modification or cofactor biosynthesis. Catalyzes the removal of elemental sulfur atoms from cysteine to produce alanine. Functions as a sulfur delivery protein for Fe-S cluster synthesis onto IscU, an Fe-S scaffold assembly protein, as well as other S acceptor proteins. This is Cysteine desulfurase IscS from Helicobacter pylori (strain P12).